The following is a 197-amino-acid chain: MACQIQASRVFPVLEIEKGLSFMINVFHRRIKASSITLTSFPYPMKSFQIRRPNRKIAFALDTGSSIPGDSGEGQEMNGDRTGLGSTRLGRIAIAGGKQLLGKINSARKNFPMKIFLLLLGFYTANALATILGQTGDWDVLVAGIVVAAIEGIGMLMYKKPSSSMFSGKLQSFVVFMNFWKAGVCLGLFVDAFKLGS.

Transmembrane regions (helical) follow at residues Met113–Gly133, Trp138–Tyr158, and Phe173–Phe193.

This sequence belongs to the ycf20 family.

Its subcellular location is the membrane. The polypeptide is Ycf20-like protein (Arabidopsis thaliana (Mouse-ear cress)).